The following is a 1382-amino-acid chain: Hepatocyte growth factor receptor (1382 aa).

The N-terminal stretch at 1–24 is a signal peptide; that stretch reads MKASAVLAPGILVILFTLVQKSNC. Over 25–933 the chain is Extracellular; the sequence is ECKEALVKSK…VIVQPDQNIT (909 aa). One can recognise a Sema domain in the interval 27 to 516; sequence KEALVKSKMN…TGKKITKIPL (490 aa). N-linked (GlcNAc...) asparagine glycosylation occurs at asparagine 45. 4 disulfide bridges follow: cysteine 95-cysteine 101, cysteine 98-cysteine 160, cysteine 133-cysteine 141, and cysteine 173-cysteine 176. The N-linked (GlcNAc...) asparagine glycan is linked to asparagine 106. Asparagine 203 and asparagine 359 each carry an N-linked (GlcNAc...) asparagine glycan. Disulfide bonds link cysteine 299–cysteine 364 and cysteine 386–cysteine 398. N-linked (GlcNAc...) asparagine glycosylation is found at asparagine 400 and asparagine 406. Intrachain disulfides connect cysteine 521/cysteine 539, cysteine 527/cysteine 562, cysteine 530/cysteine 546, and cysteine 542/cysteine 552. 3 consecutive IPT/TIG domains span residues 564–656, 658–740, and 743–837; these read PTIY…FSYV, PIIT…FSYQ, and PIIY…LIYV. Threonine 583 carries O-linked (Man) threonine glycosylation. Asparagine 608 and asparagine 636 each carry an N-linked (GlcNAc...) asparagine glycan. O-linked (Man) threonine glycans are attached at residues threonine 677 and threonine 762. Asparagine 786, asparagine 880, and asparagine 931 each carry an N-linked (GlcNAc...) asparagine glycan. A helical membrane pass occupies residues 934–956; it reads EFIVGILSISGILLTLLGLLLWW. Topologically, residues 957–1382 are cytoplasmic; it reads KKKKQIKDLG…QDNFDSEGNT (426 aa). Residue serine 967 is modified to Phosphoserine. At threonine 978 the chain carries Phosphothreonine. Phosphoserine is present on residues serine 991, serine 998, and serine 1001. At tyrosine 1004 the chain carries Phosphotyrosine. One can recognise a Protein kinase domain in the interval 1079–1346; the sequence is VHFNEVIGRG…RISAIFSTFI (268 aa). ATP is bound by residues 1085-1093 and lysine 1111; that span reads IGRGHFGCV. Aspartate 1205 (proton acceptor) is an active-site residue. The segment at 1213–1382 is interaction with RANBP9; sequence LDENFTVKVA…QDNFDSEGNT (170 aa). Tyrosine 1231 is modified (phosphotyrosine). Residues tyrosine 1235 and tyrosine 1236 each carry the phosphotyrosine; by autocatalysis modification. Phosphothreonine is present on threonine 1290. Positions 1321–1360 are interaction with MUC20; sequence WHPKAELRPSFSELVSRISAIFSTFIGEHYVHVNATYVNI. Phosphotyrosine; by autocatalysis is present on residues tyrosine 1350 and tyrosine 1357. A Phosphotyrosine modification is found at tyrosine 1366.

This sequence belongs to the protein kinase superfamily. Tyr protein kinase family. As to quaternary structure, heterodimer made of an alpha chain (50 kDa) and a beta chain (145 kDa) which are disulfide linked. Binds PLXNB1. Interacts when phosphorylated with downstream effectors including STAT3, PIK3R1, SRC, PCLG1, GRB2 and GAB1. Interacts with SPSB1, SPSB2 and SPSB4. Interacts with INPP5D/SHIP1. When phosphorylated at Tyr-1357, interacts with INPPL1/SHIP2. Interacts with RANBP9 and RANBP10, as well as SPSB1, SPSB2, SPSB3 and SPSB4. SPSB1 binding occurs in the presence and in the absence of HGF, however HGF treatment has a positive effect on this interaction. Interacts with MUC20; prevents interaction with GRB2 and suppresses hepatocyte growth factor-induced cell proliferation. Interacts with GRB10. Interacts with PTPN1 and PTPN2. Interacts with tensin TNS3. Interacts (when phosphorylated) with tensin TNS4 (via SH2 domain); the interaction increases MET protein stability by inhibiting MET endocytosis and subsequent lysosomal degradation. Autophosphorylated in response to ligand binding on Tyr-1235 and Tyr-1236 in the kinase domain leading to further phosphorylation of Tyr-1350 and Tyr-1357 in the C-terminal multifunctional docking site. Dephosphorylated by PTPRJ at Tyr-1350 and Tyr-1366. Dephosphorylated by PTPN1 and PTPN2. In terms of processing, ubiquitinated. Ubiquitination by CBL regulates the receptor stability and activity through proteasomal degradation. Post-translationally, O-mannosylation of IPT/TIG domains by TMEM260 is required for protein maturation. O-mannosylated residues are composed of single mannose glycans that are not elongated or modified.

It localises to the membrane. The enzyme catalyses L-tyrosyl-[protein] + ATP = O-phospho-L-tyrosyl-[protein] + ADP + H(+). In its inactive state, the C-terminal tail interacts with the catalytic domain and inhibits the kinase activity. Upon ligand binding, the C-terminal tail is displaced and becomes phosphorylated, thus increasing the kinase activity. Its function is as follows. Receptor tyrosine kinase that transduces signals from the extracellular matrix into the cytoplasm by binding to hepatocyte growth factor/HGF ligand. Regulates many physiological processes including proliferation, scattering, morphogenesis and survival. Ligand binding at the cell surface induces autophosphorylation of MET on its intracellular domain that provides docking sites for downstream signaling molecules. Following activation by ligand, interacts with the PI3-kinase subunit PIK3R1, PLCG1, SRC, GRB2, STAT3 or the adapter GAB1. Recruitment of these downstream effectors by MET leads to the activation of several signaling cascades including the RAS-ERK, PI3 kinase-AKT, or PLCgamma-PKC. The RAS-ERK activation is associated with the morphogenetic effects while PI3K/AKT coordinates prosurvival effects. During embryonic development, MET signaling plays a role in gastrulation, development and migration of muscles and neuronal precursors, angiogenesis and kidney formation. In adults, participates in wound healing as well as organ regeneration and tissue remodeling. Also promotes differentiation and proliferation of hematopoietic cells. The protein is Hepatocyte growth factor receptor (MET) of Atelerix albiventris (Middle-African hedgehog).